The sequence spans 358 residues: Trace amine-associated receptor 7d (358 aa).

Residues 1–47 (MATGDDSFPWDQDSILSRDLFSATSTELCYENLNRSCVRSPYSPGPR) lie on the Extracellular side of the membrane. N34 carries N-linked (GlcNAc...) asparagine glycosylation. Disulfide bonds link C37–C201 and C120–C205. The helical transmembrane segment at 48–68 (LILYAVFGFGAVLAVCGNLLV) threads the bilayer. The Cytoplasmic portion of the chain corresponds to 69–83 (MTSILHFRQLHSPAN). A helical membrane pass occupies residues 84–104 (FLVASLACADFLVGVMVMPFS). Residues 105 to 121 (MVRSVEGCWYFGESYCK) lie on the Extracellular side of the membrane. A helical transmembrane segment spans residues 122–143 (FHSCFEGSFCYSSLFHLCFISV). Residues 144-166 (DRYIAVSDPLTYPTRFTASVSGK) are Cytoplasmic-facing. The helical transmembrane segment at 167-187 (CITFSWLLSIIYSFSLLYTGA) threads the bilayer. Residues 188-212 (NDAGLEDLVSALTCVGGCQIAVNQT) are Extracellular-facing. N210 is a glycosylation site (N-linked (GlcNAc...) asparagine). The chain crosses the membrane as a helical span at residues 213 to 233 (WVFINFLLFLIPTLVMITVYS). At 234–274 (KIFLIAKQQAQNIEKMSKQTARASESYKDRVTKRERKAAKT) the chain is on the cytoplasmic side. The chain crosses the membrane as a helical span at residues 275–295 (LGIAVAAFLLSWLPYFIDSII). The Extracellular segment spans residues 296–309 (DAFLGFITPTYVYE). The chain crosses the membrane as a helical span at residues 310–333 (ILVWIVYYNSAMNPLIYAFFYSWF). The Cytoplasmic portion of the chain corresponds to 334 to 358 (RKAIKLIVSGKILRENSSTTNLFPE).

It belongs to the G-protein coupled receptor 1 family. In terms of tissue distribution, specifically expressed in neurons of the olfactory epithelium.

Its subcellular location is the cell membrane. In terms of biological role, olfactory receptor specific for trace amines, such as beta-phenylethylamine (beta-PEA). Trace amine compounds are enriched in animal body fluids and act on trace amine-associated receptors (TAARs) to elicit both intraspecific and interspecific innate behaviors. Ligand-binding causes a conformation change that triggers signaling via G(s)-class of G alpha proteins (GNAL or GNAS). This Mus musculus (Mouse) protein is Trace amine-associated receptor 7d.